A 160-amino-acid chain; its full sequence is Large ribosomal subunit protein eL21 (160 aa).

This sequence belongs to the eukaryotic ribosomal protein eL21 family. As to quaternary structure, component of the large ribosomal subunit. Mature ribosomes consist of a small (40S) and a large (60S) subunit. The 40S subunit contains about 32 different proteins and 1 molecule of RNA (18S). The 60S subunit contains 45 different proteins and 3 molecules of RNA (25S, 5.8S and 5S).

Its subcellular location is the cytoplasm. Its function is as follows. Component of the ribosome, a large ribonucleoprotein complex responsible for the synthesis of proteins in the cell. The small ribosomal subunit (SSU) binds messenger RNAs (mRNAs) and translates the encoded message by selecting cognate aminoacyl-transfer RNA (tRNA) molecules. The large subunit (LSU) contains the ribosomal catalytic site termed the peptidyl transferase center (PTC), which catalyzes the formation of peptide bonds, thereby polymerizing the amino acids delivered by tRNAs into a polypeptide chain. The nascent polypeptides leave the ribosome through a tunnel in the LSU and interact with protein factors that function in enzymatic processing, targeting, and the membrane insertion of nascent chains at the exit of the ribosomal tunnel. This is Large ribosomal subunit protein eL21 from Candida albicans (strain SC5314 / ATCC MYA-2876) (Yeast).